The sequence spans 471 residues: L-lysine 2,3-aminomutase (471 aa).

The region spanning 120–332 (HRYPDRVLFL…GLRGHTSGYA (213 aa)) is the Radical SAM core domain. Positions 134, 138, and 141 each coordinate [4Fe-4S] cluster. Lys346 is modified (N6-(pyridoxal phosphate)lysine).

This sequence belongs to the radical SAM superfamily. KamA family. Homotetramer. It depends on [4Fe-4S] cluster as a cofactor. Requires pyridoxal 5'-phosphate as cofactor.

It carries out the reaction L-lysine = (3S)-3,6-diaminohexanoate. Its pathway is amino-acid degradation; L-lysine degradation via acetate pathway. In terms of biological role, catalyzes the interconversion of L-alpha-lysine and L-beta-lysine. The sequence is that of L-lysine 2,3-aminomutase (kamA) from Bacillus subtilis (strain 168).